Consider the following 1140-residue polypeptide: Chromosome partition protein Smc (1140 aa).

34–41 provides a ligand contact to ATP; that stretch reads PNGSGKSN. Residues 160–484 adopt a coiled-coil conformation; it reads VDQFDSEIER…EKEASAKIAS (325 aa). In terms of domain architecture, SMC hinge spans 502-619; sequence EGVIGLVRDL…VQDIDAGRRL (118 aa). A coiled-coil region spans residues 660 to 990; the sequence is LEGMKIQLSS…MLNEKKREVF (331 aa).

It belongs to the SMC family. As to quaternary structure, homodimer.

Its subcellular location is the cytoplasm. Functionally, required for chromosome condensation and partitioning. This is Chromosome partition protein Smc from Thermoplasma acidophilum (strain ATCC 25905 / DSM 1728 / JCM 9062 / NBRC 15155 / AMRC-C165).